A 160-amino-acid polypeptide reads, in one-letter code: NADH-quinone oxidoreductase subunit B (160 aa).

Residues Cys37, Cys38, Cys102, and Cys132 each coordinate [4Fe-4S] cluster.

This sequence belongs to the complex I 20 kDa subunit family. As to quaternary structure, NDH-1 is composed of 14 different subunits. Subunits NuoB, C, D, E, F, and G constitute the peripheral sector of the complex. The cofactor is [4Fe-4S] cluster.

It localises to the cell inner membrane. It carries out the reaction a quinone + NADH + 5 H(+)(in) = a quinol + NAD(+) + 4 H(+)(out). In terms of biological role, NDH-1 shuttles electrons from NADH, via FMN and iron-sulfur (Fe-S) centers, to quinones in the respiratory chain. Couples the redox reaction to proton translocation (for every two electrons transferred, four hydrogen ions are translocated across the cytoplasmic membrane), and thus conserves the redox energy in a proton gradient. The protein is NADH-quinone oxidoreductase subunit B of Neisseria gonorrhoeae (strain ATCC 700825 / FA 1090).